Consider the following 346-residue polypeptide: 3 beta-hydroxysteroid dehydrogenase/Delta 5--&gt;4-isomerase (346 aa).

Residue Tyr-147 is the Proton acceptor of the active site. Lys-151 provides a ligand contact to NAD(+).

Belongs to the 3-beta-HSD family.

The catalysed reaction is a 3beta-hydroxy-Delta(5)-steroid + NAD(+) = a 3-oxo-Delta(5)-steroid + NADH + H(+). The enzyme catalyses a 3-oxo-Delta(5)-steroid = a 3-oxo-Delta(4)-steroid. It functions in the pathway lipid metabolism; steroid biosynthesis. Catalyzes the oxidative conversion of Delta(5)-ene-3-beta-hydroxy steroid, and the oxidative conversion of ketosteroids. The 3-beta-HSD enzymatic system plays a crucial role in the biosynthesis of all classes of hormonal steroids. During viral infection, steroid production contributes to virulence by inhibiting the host inflammatory response. The protein is 3 beta-hydroxysteroid dehydrogenase/Delta 5--&gt;4-isomerase (OPG174) of Monkeypox virus.